Consider the following 258-residue polypeptide: MQKLLLDPALRNWVLLPIMFVMILIGILRHNATILLQSSPKKLSKEEIREQRLLQRAYALRACSNSLLPESIEARKCFLIESLKSGKYLKPVDPNAPKAANPLMDDKTLEGLMESMKGNMLMVVPQTIIMTWINEFFSGFILLKLPFPLTLRFKSIFQSGVATQDLDVQWVSSISWYFLNLFGLKSVYALLLGENNAASNATNEMGMAGFSSAAATAQLIQPGQDISKMMLSEAENVQILKNESLLVDVEKRLLAQFA.

The next 3 membrane-spanning stretches (helical) occupy residues P8–L28, V123–L143, and S173–G193.

It belongs to the EMC3 family.

It localises to the cytoplasm. Its subcellular location is the membrane. This Schizosaccharomyces pombe (strain 972 / ATCC 24843) (Fission yeast) protein is ER membrane protein complex subunit 3.